The following is a 600-amino-acid chain: Phosphoenolpyruvate carboxykinase (ATP) (600 aa).

Glycine 302 to threonine 309 lines the ATP pocket.

It belongs to the phosphoenolpyruvate carboxykinase (ATP) family.

It catalyses the reaction oxaloacetate + ATP = phosphoenolpyruvate + ADP + CO2. The protein operates within carbohydrate biosynthesis; gluconeogenesis. The polypeptide is Phosphoenolpyruvate carboxykinase (ATP) (acuF) (Emericella nidulans (strain FGSC A4 / ATCC 38163 / CBS 112.46 / NRRL 194 / M139) (Aspergillus nidulans)).